An 832-amino-acid chain; its full sequence is Mechanosensitive cation channel TMEM63B (832 aa).

The Extracellular segment spans residues 1-40 (MLPFLLATLGTAALNSSNPKDYCYSARIRSTVLQGLPFGG). The chain crosses the membrane as a helical span at residues 41 to 65 (VPTVLALDFMCFLALLFLFSILRKV). Residue Cys-51 is the site of S-palmitoyl cysteine attachment. The Cytoplasmic segment spans residues 66–145 (AWDYGRLALV…KDDEIRDKCG (80 aa)). Residues 86 to 88 (RER) carry the Mediates endoplasmic reticulum retention motif. Ser-111, Ser-113, Ser-114, and Ser-115 each carry phosphoserine. Cys-126 carries the S-palmitoyl cysteine lipid modification. Residues 146–178 (GDAVHYLSFQRHIIGLLVVVGVLSVGIVLPVNF) form a helical membrane-spanning segment. The Extracellular portion of the chain corresponds to 179 to 202 (SGDLLENNAYSFGRTTIANLKSGN). Residues 203-227 (NLLWLHTSFAFLYLLLTVYSMRRHT) traverse the membrane as a helical segment. The Cytoplasmic portion of the chain corresponds to 228 to 427 (SKMRYKEDDL…IYWEHLSIRG (200 aa)). Positions 231 to 426 (RYKEDDLVKR…NIYWEHLSIR (196 aa)) are intracellular linker IL2; confers mechanosensitivity. S-palmitoyl cysteine attachment occurs at residues Cys-382 and Cys-398. The helical transmembrane segment at 428 to 457 (FIWWLRCLVINVVLFILLFFLTTPAIIITT) threads the bilayer. Topologically, residues 458–472 (MDKFNVTKPVEYLNN) are extracellular. An N-linked (GlcNAc...) asparagine glycan is attached at Asn-462. The chain crosses the membrane as a helical span at residues 473-502 (PIITQFFPTLLLWCFSALLPTIVYYSAFFE). The Cytoplasmic portion of the chain corresponds to 503 to 506 (AHWT). A helical membrane pass occupies residues 507 to 543 (RSGENRTTMHKCYTFLIFMVLLLPSLGLSSLDLFFRW). The Extracellular portion of the chain corresponds to 544-566 (LFDKKFLAEAAIRFECVFLPDNG). Residues 567 to 599 (AFFVNYVIASAFIGNAMDLLRIPGLLMYMIRLC) form a helical membrane-spanning segment. A gating helix region spans residues 567 to 599 (AFFVNYVIASAFIGNAMDLLRIPGLLMYMIRLC). The Cytoplasmic portion of the chain corresponds to 600–619 (LARSAAERRNVKRHQAYEFQ). A helical transmembrane segment spans residues 620–638 (FGAAYAWMMCVFTVVMTYS). Over 639–641 (ITC) the chain is Extracellular. A helical transmembrane segment spans residues 642–666 (PIIVPFGLMYMLLKHLVDRYNLYYA). At 667-673 (YLPAKLD) the chain is on the cytoplasmic side. The helical transmembrane segment at 674 to 702 (KKIHSGAVNQVVAAPILCLFWLLFFSTMR) threads the bilayer. Residues 703–707 (TGFLA) lie on the Extracellular side of the membrane. A helical membrane pass occupies residues 708–728 (PTSMFTFVVLVITIVICLCHV). S-palmitoyl cysteine attachment occurs at residues Cys-726 and Cys-729. Topologically, residues 729–832 (CFGHFKYLSA…DSLIENEIHQ (104 aa)) are cytoplasmic. 2 disordered regions span residues 748 to 767 (TDAV…AVPK) and 776 to 818 (LQDS…DTDF). The span at 749-758 (DAVSSRSNGR) shows a compositional bias: polar residues. A compositionally biased stretch (low complexity) spans 789 to 801 (PGSSGDEPPSSSS).

It belongs to the CSC1 (TC 1.A.17) family. As to quaternary structure, monomer. Interacts with SLC19A2; interaction is required for the phospholipid scramblase activity. In terms of processing, palmitoylation is required for localization to the plasma membrane and stability. Expressed in cochlear hair cells (at protein level). Highly expressed in the subfornical organ of the brain. Expressed in small intestine. In terms of tissue distribution, brain-specific.

It is found in the cell membrane. It localises to the endoplasmic reticulum membrane. Its subcellular location is the lysosome membrane. The protein resides in the early endosome membrane. It catalyses the reaction Ca(2+)(in) = Ca(2+)(out). It carries out the reaction Mg(2+)(in) = Mg(2+)(out). The enzyme catalyses K(+)(in) = K(+)(out). The catalysed reaction is Na(+)(in) = Na(+)(out). It catalyses the reaction Cs(+)(in) = Cs(+)(out). It carries out the reaction a 1,2-diacyl-sn-glycero-3-phosphocholine(in) = a 1,2-diacyl-sn-glycero-3-phosphocholine(out). The enzyme catalyses a sphingomyelin(in) = a sphingomyelin(out). Its function is as follows. Mechanosensitive cation channel with low conductance and high activation threshold. Osmosensitive cation channel preferentially activated by hypotonic stress. Also acts as a phospholipid scramblase in response to changes in membrane structure: upon changes in membrane curvature and thickness, alters its conformation and translocates phospholipids, such as phosphatidylcholine and sphingomyelin, thereby controlling plasma membrane lipid distribution. Forms a heterodimer with SLC19A2, which mediates phospholipid scramblase activity following Ca(2+) stimulation. Expressed in excitatory neurons of the subfornical organ and functions as a thirst receptor that mediates neuronal response to hyperosmolality to drive thirst and drinking behavior. Facilitates intestinal motility by promoting proliferation of intestinal stem cells. Essential for the baby's first breath and respiration throughout life. Upon lung inflation conducts cation currents in alveolar type 1 and 2 cells triggering lamellar body exocytosis and surfactant secretion into airspace. Acts as an osmosensor in cochlear outer hair cells (OHCs) where it mediates calcium influx and regulatory volume decrease response. Required for the maintenance of OHC morphology, OHC survival and normal hearing. Functionally, brain-specific osmosensitive calcium channel isoform. The protein is Mechanosensitive cation channel TMEM63B of Mus musculus (Mouse).